Reading from the N-terminus, the 165-residue chain is Peptidyl-prolyl cis-trans isomerase-like 1 (165 aa).

Residues 3–157 (EREEVILDTS…IVQKILYALN (155 aa)) enclose the PPIase cyclophilin-type domain.

It belongs to the cyclophilin-type PPIase family. PPIL1 subfamily.

The enzyme catalyses [protein]-peptidylproline (omega=180) = [protein]-peptidylproline (omega=0). Functionally, PPIases accelerate the folding of proteins. It catalyzes the cis-trans isomerization of proline imidic peptide bonds in oligopeptides. This chain is Peptidyl-prolyl cis-trans isomerase-like 1 (cyp3), found in Rhizopus delemar (strain RA 99-880 / ATCC MYA-4621 / FGSC 9543 / NRRL 43880) (Mucormycosis agent).